The primary structure comprises 729 residues: Fatty acid oxidation complex subunit alpha (729 aa).

Residues 1-189 are enoyl-CoA hydratase/isomerase; that stretch reads MLYKGDTLYL…KIGLVDGVVK (189 aa). Asp296 serves as a coordination point for substrate. Residues 311-729 form a 3-hydroxyacyl-CoA dehydrogenase region; that stretch reads ETPKQAAVLG…ARPVGDLKTA (419 aa). Residues Met324, Asp343, 400–402, Lys407, and Ser429 each bind NAD(+); that span reads IVE. The active-site For 3-hydroxyacyl-CoA dehydrogenase activity is His450. An NAD(+)-binding site is contributed by Asn453. Residues Asn500 and Tyr660 each coordinate substrate. The disordered stretch occupies residues 708–729; it reads RHNEPYYPPVEPARPVGDLKTA.

This sequence in the N-terminal section; belongs to the enoyl-CoA hydratase/isomerase family. The protein in the C-terminal section; belongs to the 3-hydroxyacyl-CoA dehydrogenase family. As to quaternary structure, heterotetramer of two alpha chains (FadB) and two beta chains (FadA).

The enzyme catalyses a (3S)-3-hydroxyacyl-CoA + NAD(+) = a 3-oxoacyl-CoA + NADH + H(+). The catalysed reaction is a (3S)-3-hydroxyacyl-CoA = a (2E)-enoyl-CoA + H2O. It carries out the reaction a 4-saturated-(3S)-3-hydroxyacyl-CoA = a (3E)-enoyl-CoA + H2O. It catalyses the reaction (3S)-3-hydroxybutanoyl-CoA = (3R)-3-hydroxybutanoyl-CoA. The enzyme catalyses a (3Z)-enoyl-CoA = a 4-saturated (2E)-enoyl-CoA. The catalysed reaction is a (3E)-enoyl-CoA = a 4-saturated (2E)-enoyl-CoA. Its pathway is lipid metabolism; fatty acid beta-oxidation. In terms of biological role, involved in the aerobic and anaerobic degradation of long-chain fatty acids via beta-oxidation cycle. Catalyzes the formation of 3-oxoacyl-CoA from enoyl-CoA via L-3-hydroxyacyl-CoA. It can also use D-3-hydroxyacyl-CoA and cis-3-enoyl-CoA as substrate. This Escherichia coli O157:H7 protein is Fatty acid oxidation complex subunit alpha.